The sequence spans 190 residues: Heme-binding protein 1 (190 aa).

The protein belongs to the HEBP family. In terms of assembly, monomer.

The protein localises to the cytoplasm. In terms of biological role, may bind free porphyrinogens that may be present in the cell and thus facilitate removal of these potentially toxic compound. Binds with a high affinity to one molecule of heme or porphyrins. It binds metalloporphyrins, free porphyrins and N-methylprotoporphyrin with similar affinities. This chain is Heme-binding protein 1 (hebp1), found in Xenopus tropicalis (Western clawed frog).